Consider the following 545-residue polypeptide: Glucose starvation modulator protein 1 (545 aa).

A DNA-binding region (zn(2)-C6 fungal-type) is located at residues 20-48 (CGFCHEKHLQCDVGRPCQNCRKRNIASFC). The segment covering 51–60 (KVKRRRKRKR) has biased composition (basic residues). Disordered regions lie at residues 51-131 (KVKR…AMKD) and 228-270 (YISL…WQQQ). The span at 61 to 71 (SDASNFDKDEA) shows a compositional bias: basic and acidic residues. Over residues 72 to 92 (ATQTLNFNTVNPGEGSSSAMT) the composition is skewed to polar residues. Residues 98–110 (TGTTTATTTRTTT) are compositionally biased toward low complexity. The span at 111–125 (NFRSESKASSSTENI) shows a compositional bias: polar residues. A compositionally biased stretch (low complexity) spans 257-270 (QQKESQQMQLWQQQ). In terms of domain architecture, PAS spans 416-486 (ELENMSKLVN…DLFHEHLAFG (71 aa)).

This sequence belongs to the ERT1/acuK family.

Its subcellular location is the nucleus. Transcription factor which regulates nonfermentable carbon utilization. This chain is Glucose starvation modulator protein 1 (GSM1), found in Zygosaccharomyces rouxii (strain ATCC 2623 / CBS 732 / NBRC 1130 / NCYC 568 / NRRL Y-229).